Consider the following 417-residue polypeptide: Putative transporter AmpG 1 (417 aa).

The next 12 membrane-spanning stretches (helical) occupy residues leucine 7–threonine 27, isoleucine 42–phenylalanine 62, leucine 78–leucine 98, leucine 104–isoleucine 124, glycine 143–leucine 163, glutamate 171–isoleucine 191, alanine 225–tyrosine 245, valine 273–methionine 293, serine 301–isoleucine 321, leucine 328–isoleucine 348, phenylalanine 366–valine 386, and phenylalanine 389–leucine 409.

Belongs to the major facilitator superfamily.

Its subcellular location is the cell inner membrane. The sequence is that of Putative transporter AmpG 1 (ampG1) from Rickettsia conorii (strain ATCC VR-613 / Malish 7).